We begin with the raw amino-acid sequence, 338 residues long: Tripartite motif-containing protein 44 (338 aa).

2 disordered regions span residues methionine 1–glutamate 25 and alanine 72–proline 162. Over residues glutamate 95–proline 162 the composition is skewed to acidic residues. A coiled-coil region spans residues glutamate 109–glutamate 153. The segment at valine 171–leucine 212 adopts a B box-type zinc-finger fold. Residues cysteine 176, histidine 179, cysteine 198, and histidine 204 each contribute to the Zn(2+) site. Residues glutamine 257–glutamate 322 adopt a coiled-coil conformation. The interval methionine 307–aspartate 338 is disordered. Residues glycine 327 to aspartate 338 are compositionally biased toward acidic residues.

As to quaternary structure, interacts (via coiled coil) with TRIM17 (via coiled coil).

May play a role in the process of differentiation and maturation of neuronal cells. May regulate the activity of TRIM17. Is a negative regulator of PAX6 expression. The polypeptide is Tripartite motif-containing protein 44 (TRIM44) (Bos taurus (Bovine)).